The following is a 299-amino-acid chain: NAD kinase 1 (299 aa).

The active-site Proton acceptor is the Asp-62. NAD(+)-binding positions include 62–63, Lys-67, 143–144, Lys-173, and Asp-175; these read DG and ND.

It belongs to the NAD kinase family. It depends on a divalent metal cation as a cofactor.

It is found in the cytoplasm. The catalysed reaction is NAD(+) + ATP = ADP + NADP(+) + H(+). Its function is as follows. Involved in the regulation of the intracellular balance of NAD and NADP, and is a key enzyme in the biosynthesis of NADP. Catalyzes specifically the phosphorylation on 2'-hydroxyl of the adenosine moiety of NAD to yield NADP. The sequence is that of NAD kinase 1 from Prochlorococcus marinus subsp. pastoris (strain CCMP1986 / NIES-2087 / MED4).